The following is a 433-amino-acid chain: MRNLLRGMLVVICCMAGIAAADEKNILVTSGSDRATPIAVVPFGWQGGSVLPDDMAQIVSDDLRNSGYYAPIPKGNMISQPNQASEVVFRDWKAVGAQYLMVGNITPAGGRLQIQYTLFNVATEQQVLTGSVSGTAEQLRDMAHYISDQSFEKLTGIKGAFSTRLLYVTAERFSVDNTRYTLQRSDYDGARAVTLLQSREPILSPRFAPDGKRIAYVSFEQRRPRIFVQHIDTGRREQITNFEGLNGAPAWSPDGSRLAFVLSKDGNPDIYVMNMASRQISRVTSGPGINTEPFWGKDGSTIYFTSDRGGKPQVYKANVNGGGAERVTFIGNYNANPKLSADEKTLVMIHRQDGFTNFRVAAQDLQRGTVKILTDTNLDESATVAPNGTMVIYATRQQGRGVLMLVSINGRVRLPLPTAQGEVREPSWSPYLN.

The signal sequence occupies residues 1 to 21 (MRNLLRGMLVVICCMAGIAAA).

It belongs to the TolB family. As to quaternary structure, the Tol-Pal system is composed of five core proteins: the inner membrane proteins TolA, TolQ and TolR, the periplasmic protein TolB and the outer membrane protein Pal. They form a network linking the inner and outer membranes and the peptidoglycan layer.

The protein localises to the periplasm. In terms of biological role, part of the Tol-Pal system, which plays a role in outer membrane invagination during cell division and is important for maintaining outer membrane integrity. In Pseudomonas fluorescens (strain SBW25), this protein is Tol-Pal system protein TolB.